A 361-amino-acid polypeptide reads, in one-letter code: Epi-isozizaene synthase (361 aa).

Positions 99, 103, 240, 244, and 248 each coordinate Mg(2+). Residues 99–103 (DDRHD) carry the DDXXD motif motif.

Belongs to the terpene synthase family. Requires Mg(2+) as cofactor. Mn(2+) is required as a cofactor. It depends on Fe(3+) as a cofactor.

The enzyme catalyses (2E,6E)-farnesyl diphosphate = (+)-epi-isozizaene + diphosphate. It functions in the pathway sesquiterpene biosynthesis; epi-isozizaene biosynthesis. Functionally, catalyzes the cyclization of farnesyl diphosphate (FPP) to the sesquiterpene epi-isozizaene. The protein is Epi-isozizaene synthase (cyc1) of Streptomyces coelicolor (strain ATCC BAA-471 / A3(2) / M145).